Consider the following 254-residue polypeptide: 3-deoxy-manno-octulosonate cytidylyltransferase (254 aa).

This sequence belongs to the KdsB family.

The protein resides in the cytoplasm. The catalysed reaction is 3-deoxy-alpha-D-manno-oct-2-ulosonate + CTP = CMP-3-deoxy-beta-D-manno-octulosonate + diphosphate. The protein operates within nucleotide-sugar biosynthesis; CMP-3-deoxy-D-manno-octulosonate biosynthesis; CMP-3-deoxy-D-manno-octulosonate from 3-deoxy-D-manno-octulosonate and CTP: step 1/1. It participates in bacterial outer membrane biogenesis; lipopolysaccharide biosynthesis. Its function is as follows. Activates KDO (a required 8-carbon sugar) for incorporation into bacterial lipopolysaccharide in Gram-negative bacteria. The chain is 3-deoxy-manno-octulosonate cytidylyltransferase from Polynucleobacter necessarius subsp. necessarius (strain STIR1).